The chain runs to 293 residues: Ribosomal protein L11 methyltransferase (293 aa).

Residues T145, G166, D188, and N230 each contribute to the S-adenosyl-L-methionine site.

Belongs to the methyltransferase superfamily. PrmA family.

The protein localises to the cytoplasm. It catalyses the reaction L-lysyl-[protein] + 3 S-adenosyl-L-methionine = N(6),N(6),N(6)-trimethyl-L-lysyl-[protein] + 3 S-adenosyl-L-homocysteine + 3 H(+). Functionally, methylates ribosomal protein L11. The protein is Ribosomal protein L11 methyltransferase of Shewanella denitrificans (strain OS217 / ATCC BAA-1090 / DSM 15013).